A 460-amino-acid polypeptide reads, in one-letter code: tRNA (guanine(37)-N(1))-methyltransferase (460 aa).

S-adenosyl-L-methionine-binding positions include His-204, 243-244 (DL), 271-272 (DA), and Asn-292. The segment covering 390–428 (ASTTTTPTTSNTNTSTTTSTTSTSTTTTESTNTNNSANN) has biased composition (low complexity). The disordered stretch occupies residues 390 to 460 (ASTTTTPTTS…SIDTNKKLKN (71 aa)). The span at 442–451 (DSNETNETDS) shows a compositional bias: acidic residues.

Belongs to the class I-like SAM-binding methyltransferase superfamily. TRM5/TYW2 family. In terms of assembly, monomer.

It localises to the mitochondrion matrix. The protein resides in the nucleus. It is found in the cytoplasm. It catalyses the reaction guanosine(37) in tRNA + S-adenosyl-L-methionine = N(1)-methylguanosine(37) in tRNA + S-adenosyl-L-homocysteine + H(+). Functionally, specifically methylates the N1 position of guanosine-37 in various cytoplasmic and mitochondrial tRNAs. Methylation is not dependent on the nature of the nucleoside 5' of the target nucleoside. This is the first step in the biosynthesis of wybutosine (yW), a modified base adjacent to the anticodon of tRNAs and required for accurate decoding. The protein is tRNA (guanine(37)-N(1))-methyltransferase (trmt5) of Dictyostelium discoideum (Social amoeba).